The primary structure comprises 85 residues: Sec-independent protein translocase protein TatA (85 aa).

Residues 1-21 (MGSFSIWHWLIVLVIIMMVFG) form a helical membrane-spanning segment. Basic and acidic residues predominate over residues 39 to 51 (FKDGMREGQEDKP). The segment at 39–85 (FKDGMREGQEDKPAGSQQPQQTAGQPPRELHDATTIDVEARDKSKQG) is disordered. The span at 53 to 62 (GSQQPQQTAG) shows a compositional bias: polar residues. The span at 66–85 (RELHDATTIDVEARDKSKQG) shows a compositional bias: basic and acidic residues.

It belongs to the TatA/E family. As to quaternary structure, the Tat system comprises two distinct complexes: a TatABC complex, containing multiple copies of TatA, TatB and TatC subunits, and a separate TatA complex, containing only TatA subunits. Substrates initially bind to the TatABC complex, which probably triggers association of the separate TatA complex to form the active translocon.

The protein localises to the cell inner membrane. Functionally, part of the twin-arginine translocation (Tat) system that transports large folded proteins containing a characteristic twin-arginine motif in their signal peptide across membranes. TatA could form the protein-conducting channel of the Tat system. This is Sec-independent protein translocase protein TatA from Ralstonia pickettii (strain 12J).